The following is a 297-amino-acid chain: 3-mercaptopyruvate sulfurtransferase (297 aa).

Ala-2 is subject to N-acetylalanine. Residues Ser-3, Trp-15, Pro-23, and Ser-35 each carry the phosphoserine modification. A Rhodanese 1 domain is found at 25 to 144 (AGQPLQLLDA…WLRQNLPLSS (120 aa)). Lys-40 is modified (N6-acetyllysine; alternate). Lys-40 bears the N6-succinyllysine; alternate mark. The segment at 145–160 (GKSQPAPAEFRAQLDP) is hinge. Residues Lys-146 and Lys-164 each carry the N6-succinyllysine modification. Residues 174–288 (ESRRFQVVDS…WYMRARPEDV (115 aa)) form the Rhodanese 2 domain. Residue Arg-188 participates in substrate binding. Residue Cys-248 is the Cysteine persulfide intermediate of the active site.

As to quaternary structure, monomer (active form). Homodimer; disulfide-linked (inactive form).

Its subcellular location is the cytoplasm. The protein localises to the mitochondrion. It is found in the synapse. The protein resides in the synaptosome. The enzyme catalyses 2-oxo-3-sulfanylpropanoate + [thioredoxin]-dithiol = [thioredoxin]-disulfide + hydrogen sulfide + pyruvate + H(+). With respect to regulation, by oxidative stress, and thioredoxin. Under oxidative stress conditions, the catalytic cysteine site is converted to a sulfenate which inhibits the MPST enzyme activity. Reduced thioredoxin cleaves an intersubunit disulfide bond to turn on the redox switch and reactivate the enzyme. Functionally, transfer of a sulfur ion to cyanide or to other thiol compounds. Also has weak rhodanese activity. Detoxifies cyanide and is required for thiosulfate biosynthesis. Acts as an antioxidant. In combination with cysteine aminotransferase (CAT), contributes to the catabolism of cysteine and is an important producer of hydrogen sulfide in the brain, retina and vascular endothelial cells. Hydrogen sulfide H(2)S is an important synaptic modulator, signaling molecule, smooth muscle contractor and neuroprotectant. Its production by the 3MST/CAT pathway is regulated by calcium ions. This Homo sapiens (Human) protein is 3-mercaptopyruvate sulfurtransferase (MPST).